Here is a 1003-residue protein sequence, read N- to C-terminus: UPF0182 protein Mkms_1433 (1003 aa).

Transmembrane regions (helical) follow at residues Val-18–Asp-38, Val-63–Leu-83, Leu-114–Tyr-134, Phe-176–Ile-196, Ile-211–Asp-231, Lys-260–Leu-280, and Ile-288–Val-308. Residues Ala-902–Ala-937 show a composition bias toward low complexity. The interval Ala-902–Ser-979 is disordered.

It belongs to the UPF0182 family.

It is found in the cell membrane. In Mycobacterium sp. (strain KMS), this protein is UPF0182 protein Mkms_1433.